A 142-amino-acid chain; its full sequence is Large ribosomal subunit protein uL11 (142 aa).

It belongs to the universal ribosomal protein uL11 family. Part of the ribosomal stalk of the 50S ribosomal subunit. Interacts with L10 and the large rRNA to form the base of the stalk. L10 forms an elongated spine to which L12 dimers bind in a sequential fashion forming a multimeric L10(L12)X complex. One or more lysine residues are methylated.

Functionally, forms part of the ribosomal stalk which helps the ribosome interact with GTP-bound translation factors. The polypeptide is Large ribosomal subunit protein uL11 (Colwellia psychrerythraea (strain 34H / ATCC BAA-681) (Vibrio psychroerythus)).